A 168-amino-acid chain; its full sequence is Ribonuclease H (168 aa).

The region spanning 10-151 (NNIPVKIYTD…ADKLATNGKI (142 aa)) is the RNase H type-1 domain. Mg(2+) contacts are provided by Asp-19, Glu-57, Asp-79, and Asp-143.

Belongs to the RNase H family. Monomer. The cofactor is Mg(2+).

Its subcellular location is the cytoplasm. It carries out the reaction Endonucleolytic cleavage to 5'-phosphomonoester.. Endonuclease that specifically degrades the RNA of RNA-DNA hybrids. In Orientia tsutsugamushi (strain Boryong) (Rickettsia tsutsugamushi), this protein is Ribonuclease H.